The primary structure comprises 490 residues: Glutamate--tRNA ligase (490 aa).

The short motif at 12 to 22 is the 'HIGH' region element; sequence PSPTGTPHVGL. The short motif at 256-260 is the 'KMSKS' region element; that stretch reads KLSKR. K259 is a binding site for ATP.

The protein belongs to the class-I aminoacyl-tRNA synthetase family. Glutamate--tRNA ligase type 1 subfamily. In terms of assembly, monomer.

It localises to the cytoplasm. It carries out the reaction tRNA(Glu) + L-glutamate + ATP = L-glutamyl-tRNA(Glu) + AMP + diphosphate. Its function is as follows. Catalyzes the attachment of glutamate to tRNA(Glu) in a two-step reaction: glutamate is first activated by ATP to form Glu-AMP and then transferred to the acceptor end of tRNA(Glu). This chain is Glutamate--tRNA ligase, found in Mycobacterium sp. (strain JLS).